The chain runs to 500 residues: Lysine--tRNA ligase (500 aa).

Residues Glu410 and Glu417 each contribute to the Mg(2+) site.

It belongs to the class-II aminoacyl-tRNA synthetase family. As to quaternary structure, homodimer. Mg(2+) is required as a cofactor.

It localises to the cytoplasm. It carries out the reaction tRNA(Lys) + L-lysine + ATP = L-lysyl-tRNA(Lys) + AMP + diphosphate. The chain is Lysine--tRNA ligase from Shewanella amazonensis (strain ATCC BAA-1098 / SB2B).